The chain runs to 398 residues: Phosphoglycerate kinase (398 aa).

Residues 21 to 23 (DFN), Arg36, 59 to 62 (HLGR), Arg119, and Arg157 contribute to the substrate site. ATP contacts are provided by residues Lys208, Gly296, Glu327, and 354–357 (GGDS).

It belongs to the phosphoglycerate kinase family. Monomer.

Its subcellular location is the cytoplasm. The enzyme catalyses (2R)-3-phosphoglycerate + ATP = (2R)-3-phospho-glyceroyl phosphate + ADP. The protein operates within carbohydrate degradation; glycolysis; pyruvate from D-glyceraldehyde 3-phosphate: step 2/5. The sequence is that of Phosphoglycerate kinase from Streptococcus pyogenes serotype M3 (strain ATCC BAA-595 / MGAS315).